The chain runs to 66 residues: Small ribosomal subunit protein eS27 (66 aa).

Residues Cys21, Cys24, Cys40, and Cys43 each contribute to the Zn(2+) site. The C4-type zinc-finger motif lies at 21 to 43 (CPVCGNEQVIFSHATFPARCLVC).

Belongs to the eukaryotic ribosomal protein eS27 family. Part of the 30S ribosomal subunit. Zn(2+) serves as cofactor.

The polypeptide is Small ribosomal subunit protein eS27 (Hyperthermus butylicus (strain DSM 5456 / JCM 9403 / PLM1-5)).